The primary structure comprises 79 residues: Acyl carrier protein (79 aa).

In terms of domain architecture, Carrier spans 2–77; the sequence is ESIEQRVKKI…QAIDYINSHG (76 aa). An O-(pantetheine 4'-phosphoryl)serine modification is found at serine 37.

This sequence belongs to the acyl carrier protein (ACP) family. Post-translationally, 4'-phosphopantetheine is transferred from CoA to a specific serine of apo-ACP by AcpS. This modification is essential for activity because fatty acids are bound in thioester linkage to the sulfhydryl of the prosthetic group.

The protein resides in the cytoplasm. Its pathway is lipid metabolism; fatty acid biosynthesis. Carrier of the growing fatty acid chain in fatty acid biosynthesis. In Bordetella avium (strain 197N), this protein is Acyl carrier protein.